We begin with the raw amino-acid sequence, 251 residues long: Ubiquinone/menaquinone biosynthesis C-methyltransferase UbiE (251 aa).

Residues threonine 74, aspartate 95, and asparagine 123–alanine 124 each bind S-adenosyl-L-methionine.

Belongs to the class I-like SAM-binding methyltransferase superfamily. MenG/UbiE family.

It catalyses the reaction a 2-demethylmenaquinol + S-adenosyl-L-methionine = a menaquinol + S-adenosyl-L-homocysteine + H(+). The enzyme catalyses a 2-methoxy-6-(all-trans-polyprenyl)benzene-1,4-diol + S-adenosyl-L-methionine = a 5-methoxy-2-methyl-3-(all-trans-polyprenyl)benzene-1,4-diol + S-adenosyl-L-homocysteine + H(+). It functions in the pathway quinol/quinone metabolism; menaquinone biosynthesis; menaquinol from 1,4-dihydroxy-2-naphthoate: step 2/2. Its pathway is cofactor biosynthesis; ubiquinone biosynthesis. Methyltransferase required for the conversion of demethylmenaquinol (DMKH2) to menaquinol (MKH2) and the conversion of 2-polyprenyl-6-methoxy-1,4-benzoquinol (DDMQH2) to 2-polyprenyl-3-methyl-6-methoxy-1,4-benzoquinol (DMQH2). The chain is Ubiquinone/menaquinone biosynthesis C-methyltransferase UbiE from Pseudoalteromonas translucida (strain TAC 125).